The sequence spans 238 residues: Endothelial protein C receptor (238 aa).

The first 17 residues, 1-17 (MLTTLLPILLLSGWAFC), serve as a signal peptide directing secretion. Over 18-210 (SQDASDGLQR…GSQTSRSYTS (193 aa)) the chain is Extracellular. Asparagine 47, asparagine 64, asparagine 136, and asparagine 172 each carry an N-linked (GlcNAc...) asparagine glycan. A disulfide bond links cysteine 118 and cysteine 186. A helical membrane pass occupies residues 211–231 (LVLGVLVGSFIIAGVAVGIFL). Residues 232–238 (CTGGRRC) are Cytoplasmic-facing.

In terms of processing, N-glycosylated. Post-translationally, a soluble form exists; probably released by a metalloprotease. Seems to have the same activity as the membrane-bound form. As to expression, expressed strongly in the endothelial cells of arteries and veins in heart and lung, less intensely in capillaries in the lung and skin, and not at all in the endothelium of small vessels of the liver and kidney.

The protein localises to the membrane. Its function is as follows. Binds activated protein C. Enhances protein C activation by the thrombin-thrombomodulin complex; plays a role in the protein C pathway controlling blood coagulation. This Homo sapiens (Human) protein is Endothelial protein C receptor (PROCR).